The chain runs to 377 residues: Prolargin (377 aa).

A signal peptide spans 1-21 (MRASFFWFLPLLLILASVAQG). Positions 22-61 (QPRPKPGIRRKPKPRPTPSFPQPHEPAEPTDLPPPLPPGP) are disordered. 2 stretches are compositionally biased toward pro residues: residues 36-45 (RPTPSFPQPH) and 52-61 (DLPPPLPPGP). LRR repeat units follow at residues 90–109 (RKVP…NNFI), 110–133 (TELP…NNRI), 134–157 (RKVD…KNQL), 158–178 (EEVP…QNLI), 179–202 (SRIP…HNRL), 203–228 (SDGV…HNIL), 229–249 (RRMP…SNKI), 250–273 (ETIP…YNKL), 274–298 (SDRG…HNKI), 299–318 (SNVP…NNSI), 319–357 (EKIN…GNFL), and 358–377 (KPPI…SVVI). N-linked (GlcNAc...) asparagine glycosylation occurs at N119. N284, N315, and N322 each carry an N-linked (GlcNAc...) asparagine glycan. C327 and C368 are oxidised to a cystine.

This sequence belongs to the small leucine-rich proteoglycan (SLRP) family. SLRP class II subfamily. In terms of assembly, binds the basement membrane heparan sulfate proteoglycan perlecan and triple helical collagens type I and type II. Post-translationally, glycosylated; contains heparan sulfate.

The protein resides in the secreted. It is found in the extracellular space. The protein localises to the extracellular matrix. Its function is as follows. May anchor basement membranes to the underlying connective tissue. The polypeptide is Prolargin (Prelp) (Rattus norvegicus (Rat)).